The sequence spans 448 residues: C4-dicarboxylate transport protein (448 aa).

8 helical membrane-spanning segments follow: residues 20 to 38, 53 to 75, 88 to 110, 161 to 178, 199 to 220, 230 to 252, 325 to 347, and 362 to 384; these read LYFQ…GHFY, IRLV…IAGM, AMIY…ANTV, ILQV…LGIV, LVAI…FTIG, LAML…LGAV, LFIA…LLVA, and FITL…ALIL.

This sequence belongs to the dicarboxylate/amino acid:cation symporter (DAACS) (TC 2.A.23) family.

The protein localises to the cell inner membrane. In terms of biological role, responsible for the transport of dicarboxylates such as succinate, fumarate, and malate from the periplasm across the membrane. The protein is C4-dicarboxylate transport protein of Agrobacterium fabrum (strain C58 / ATCC 33970) (Agrobacterium tumefaciens (strain C58)).